An 802-amino-acid polypeptide reads, in one-letter code: DNA mismatch repair protein MutS (802 aa).

ATP is bound at residue G617–S624.

Belongs to the DNA mismatch repair MutS family.

Its function is as follows. This protein is involved in the repair of mismatches in DNA. It is possible that it carries out the mismatch recognition step. This protein has a weak ATPase activity. The polypeptide is DNA mismatch repair protein MutS (Buchnera aphidicola subsp. Acyrthosiphon pisum (strain Tuc7)).